Consider the following 964-residue polypeptide: Protein translocase subunit SecA (964 aa).

Residues Q86, 104–108 (GEGKT), and D494 contribute to the ATP site. Residues 846 to 964 (ETAESADTIA…YKMCHGQNEA (119 aa)) are disordered. Residues 871–882 (AEGEVEEEDEDT) are compositionally biased toward acidic residues. Low complexity predominate over residues 887 to 900 (AIAESAAASEAGES). Zn(2+) is bound by residues C947, C949, C958, and H959.

It belongs to the SecA family. Monomer and homodimer. Part of the essential Sec protein translocation apparatus which comprises SecA, SecYEG and auxiliary proteins SecDF. Other proteins may also be involved. It depends on Zn(2+) as a cofactor.

It is found in the cell membrane. The protein localises to the cytoplasm. It carries out the reaction ATP + H2O + cellular proteinSide 1 = ADP + phosphate + cellular proteinSide 2.. In terms of biological role, part of the Sec protein translocase complex. Interacts with the SecYEG preprotein conducting channel. Has a central role in coupling the hydrolysis of ATP to the transfer of proteins into and across the cell membrane, serving as an ATP-driven molecular motor driving the stepwise translocation of polypeptide chains across the membrane. The protein is Protein translocase subunit SecA of Bifidobacterium longum subsp. infantis (strain ATCC 15697 / DSM 20088 / JCM 1222 / NCTC 11817 / S12).